Here is a 394-residue protein sequence, read N- to C-terminus: 4-hydroxyphenylpyruvate dioxygenase (394 aa).

2 consecutive VOC domains span residues G27–R161 and H193–K351. H196, H279, and E362 together coordinate Fe cation.

It belongs to the 4HPPD family. It depends on Fe cation as a cofactor.

The catalysed reaction is 3-(4-hydroxyphenyl)pyruvate + O2 = homogentisate + CO2. It participates in amino-acid degradation; L-phenylalanine degradation; acetoacetate and fumarate from L-phenylalanine: step 3/6. This Yarrowia lipolytica (strain CLIB 122 / E 150) (Yeast) protein is 4-hydroxyphenylpyruvate dioxygenase.